The chain runs to 715 residues: DNA ligase (715 aa).

NAD(+) is bound by residues 47 to 51, 96 to 97, and Glu-128; these read DADYD and SL. The N6-AMP-lysine intermediate role is filled by Lys-130. Positions 151, 188, 306, and 330 each coordinate NAD(+). 4 residues coordinate Zn(2+): Cys-435, Cys-438, Cys-453, and Cys-459. Residues 637-715 form the BRCT domain; sequence RRDTAVAGKT…EDEWLALIGN (79 aa).

This sequence belongs to the NAD-dependent DNA ligase family. LigA subfamily. It depends on Mg(2+) as a cofactor. Mn(2+) is required as a cofactor.

It carries out the reaction NAD(+) + (deoxyribonucleotide)n-3'-hydroxyl + 5'-phospho-(deoxyribonucleotide)m = (deoxyribonucleotide)n+m + AMP + beta-nicotinamide D-nucleotide.. Its function is as follows. DNA ligase that catalyzes the formation of phosphodiester linkages between 5'-phosphoryl and 3'-hydroxyl groups in double-stranded DNA using NAD as a coenzyme and as the energy source for the reaction. It is essential for DNA replication and repair of damaged DNA. The protein is DNA ligase of Rhodopseudomonas palustris (strain ATCC BAA-98 / CGA009).